Consider the following 273-residue polypeptide: Shikimate dehydrogenase (NADP(+)) (273 aa).

Shikimate is bound by residues 18–20 (SKS) and Thr65. Lys69 functions as the Proton acceptor in the catalytic mechanism. Glu81 contacts NADP(+). Shikimate is bound by residues Asn90 and Asp105. Residues 130-134 (GAGGA), 154-159 (NRTHSK), and Met217 contribute to the NADP(+) site. Tyr219 provides a ligand contact to shikimate. Gly240 lines the NADP(+) pocket.

The protein belongs to the shikimate dehydrogenase family. Homodimer.

The enzyme catalyses shikimate + NADP(+) = 3-dehydroshikimate + NADPH + H(+). Its pathway is metabolic intermediate biosynthesis; chorismate biosynthesis; chorismate from D-erythrose 4-phosphate and phosphoenolpyruvate: step 4/7. Its function is as follows. Involved in the biosynthesis of the chorismate, which leads to the biosynthesis of aromatic amino acids. Catalyzes the reversible NADPH linked reduction of 3-dehydroshikimate (DHSA) to yield shikimate (SA). The sequence is that of Shikimate dehydrogenase (NADP(+)) from Herminiimonas arsenicoxydans.